Consider the following 227-residue polypeptide: MNSIEFPLLNQTTQNSVISTTSNDLSNWSRLSSLWPLLYGTSCCFIEFASLIGSRFDFDRYGLVPRSSPRQADLILTAGTVTMKMAPSLVRLYEQMPEPKYVIAMGACTITGGMFSTDSYSTVRGVDKLIPVDVYLPGCPPKPEAVIDAITKLRKKVSREIYEDRVGSQQETRCFTINHKFRVGRSTHTGNYDQGLLYQSPSISEIPYENETFLKYKIAVSSHKLVN.

[4Fe-4S] cluster contacts are provided by cysteine 43, cysteine 44, cysteine 108, and cysteine 139.

This sequence belongs to the complex I 20 kDa subunit family. In terms of assembly, NDH is composed of at least 16 different subunits, 5 of which are encoded in the nucleus. [4Fe-4S] cluster serves as cofactor.

It is found in the plastid. The protein localises to the chloroplast thylakoid membrane. It catalyses the reaction a plastoquinone + NADH + (n+1) H(+)(in) = a plastoquinol + NAD(+) + n H(+)(out). The catalysed reaction is a plastoquinone + NADPH + (n+1) H(+)(in) = a plastoquinol + NADP(+) + n H(+)(out). NDH shuttles electrons from NAD(P)H:plastoquinone, via FMN and iron-sulfur (Fe-S) centers, to quinones in the photosynthetic chain and possibly in a chloroplast respiratory chain. The immediate electron acceptor for the enzyme in this species is believed to be plastoquinone. Couples the redox reaction to proton translocation, and thus conserves the redox energy in a proton gradient. The sequence is that of NAD(P)H-quinone oxidoreductase subunit K, chloroplastic from Ranunculus macranthus (Large buttercup).